Consider the following 874-residue polypeptide: MKTSELRQKFLKFFETKGHTVVRSSSLVPHDDPTLLFTNAGMNQFKDVFLGFDKRPYSRATTAQKCVRAGGKHNDLENVGYTARHHTFFEMMGNFSFGDYFKRDAIHFAWEFLTSPEWLNIPKDKLLATVYAEDDEAYNIWLNEIGMPSERIVRIGDNKGAKYASDNFWQMGDTGPCGPCSEIFYDHGEEIWGGIPGSPEEDGDRWIEIWNCVFMQFNRDEQGNMNPLPKPSVDTGMGLERIAAVMQHVHSNYEIDLFQDLLKAVARETGAPFRMEEPSLKVIADHIRSCSFLIADGVLPSNEGRGYVLRRIIRRAVRHGYKLGQSKPFFHKLVADLVKEMGGAYPELKEKQAQIEEALKNEESRFAQTLETGMALLENALVKGGKTLGGEIIFKLYDTYGFPYDLTADICRERNIEPDEAGFEREMEAQRARARAAQSFKANAQLPYDGQDTEFKGYSERQTESKVLALYKDGEQVNELNEGDSGAVVIDFTPFYAESGGQVGDVGYIFSGENRFEVRDTQKIKAAVFGQFGVQTSGRLKVGDSVTAKVDDEIRNANMRNHSATHLMHKALRDVLGRHVEQKGSLVTAESTRFDISHPQAVTAEEIAEVERRVNEAILANVAVNAAIMSMEDAQKTGAMMLFGEKYGEEVRVLQMGGFSTELCGGTHVSRTGDIGLFKIISEGGIAAGVRRIEAITGLNALKWAQEQERLVKDIIAETKAQTEKDVLAKIQAGAAHAKALEKELARAKAELAVHAGAKLLDDAKDLGAAKLVAAQIEADAAALREIVTDLTGKSDNAVILLAAVNDGKVSLCAGVSKPLTGKVKAGDLVKFAAEQVGGKGGGRPDLAQAGGTDADKLPAVLDSVKDWVGAKLV.

H562, H566, C664, and H668 together coordinate Zn(2+).

This sequence belongs to the class-II aminoacyl-tRNA synthetase family. It depends on Zn(2+) as a cofactor.

Its subcellular location is the cytoplasm. It carries out the reaction tRNA(Ala) + L-alanine + ATP = L-alanyl-tRNA(Ala) + AMP + diphosphate. Functionally, catalyzes the attachment of alanine to tRNA(Ala) in a two-step reaction: alanine is first activated by ATP to form Ala-AMP and then transferred to the acceptor end of tRNA(Ala). Also edits incorrectly charged Ser-tRNA(Ala) and Gly-tRNA(Ala) via its editing domain. The chain is Alanine--tRNA ligase from Neisseria meningitidis serogroup B (strain ATCC BAA-335 / MC58).